A 249-amino-acid chain; its full sequence is MNTRFLLLLCCLSFTTFSQPFDAIKQPNRSEEEVTQLAEDFKDWSKASNGWRYSFITANEKEAVEDFSISGYQTANDYLRATDTSTWGVAGADARQYIRTVKSALNKLPKYKGTAYRGTWVKLSLLNKLEEGDVLVEPAFTSTSTLPEVAKRFSVVHPNSPQRLKRVLFEVKINQGGHTIAGLSEYSKEAEVLFAPNAHFRITQIERTSNHTYIGVETVKASAVKNTQKYNLYSGEEVEASFWHSLVCT.

A signal peptide spans 1–18; that stretch reads MNTRFLLLLCCLSFTTFS. Residues 31 to 223 form the TR mART core domain; sequence EEEVTQLAED…IGVETVKASA (193 aa). Residues 68 to 80, 117 to 120, and Glu137 each bind NAD(+); these read SISG…DYLR and RGTW. The active site involves Arg117. Catalysis depends on residues Ser142 and Glu191. Glu191 contacts NAD(+).

The protein belongs to the Arg-specific ADP-ribosyltransferase family.

It is found in the secreted. It catalyses the reaction L-arginyl-[protein] + NAD(+) = N(omega)-(ADP-D-ribosyl)-L-arginyl-[protein] + nicotinamide + H(+). In terms of biological role, a probable mono(ADP-ribosyl)transferase, it may ADP-ribosylate Arg in target protein(s). Upon expression in yeast cells causes cell death. This chain is Putative NAD(+)--arginine ADP-ribosyltransferase Vis, found in Vibrio splendidus (strain 12B01).